Here is a 2134-residue protein sequence, read N- to C-terminus: Genome polyprotein (2134 aa).

At 1–1377 (MSKLFSTVGR…WLFEKIKTSK (1377 aa)) the chain is on the cytoplasmic side. Residues 781-882 (IVICSGEKAK…GDYGTKEGEK (102 aa)) form the LRAT domain. Catalysis depends on residues His791 and His802. The active-site Acyl-thioester intermediate is the Cys863. The 163-residue stretch at 1127–1289 (LNKLGRLDKP…EEFSTHAMLD (163 aa)) folds into the SF3 helicase domain. Residue 1153–1160 (GNRGGGKS) participates in ATP binding. Residues 1378–1392 (WYILGCVGAALSVSV) lie within the membrane without spanning it. The Cytoplasmic segment spans residues 1393-2134 (LGVFAYHMIK…VKDRVIDDSF (742 aa)). Residue Tyr1415 is modified to O-(5'-phospho-RNA)-tyrosine. Residues 1431–1643 (DAQSVVDISN…ITKEMIEEML (213 aa)) form the Peptidase C3 domain. Catalysis depends on for protease 3C activity residues His1477, Asp1515, and Cys1603. The region spanning 1880–2001 (DLVVGLDFSN…CIKKESLDQK (122 aa)) is the RdRp catalytic domain.

Belongs to the picornaviridae polyprotein family. Post-translationally, specific enzymatic cleavages by the viral protease in vivo yield a variety of precursors and mature proteins. During virion maturation, non-infectious particles are rendered infectious following cleavage of VP0. This maturation cleavage is followed by a conformational change of the particle. VPg is uridylylated by the polymerase and is covalently linked to the 5'-end of genomic RNA. This uridylylated form acts as a nucleotide-peptide primer for the polymerase.

The protein localises to the virion. It localises to the host cytoplasm. It is found in the host cytoplasmic vesicle membrane. The catalysed reaction is RNA(n) + a ribonucleoside 5'-triphosphate = RNA(n+1) + diphosphate. It catalyses the reaction a ribonucleoside 5'-triphosphate + H2O = a ribonucleoside 5'-diphosphate + phosphate + H(+). It carries out the reaction Selective cleavage of Gln-|-Gly bond in the poliovirus polyprotein. In other picornavirus reactions Glu may be substituted for Gln, and Ser or Thr for Gly.. Capsid proteins VP1, VP2, and VP3 form a closed capsid enclosing the viral positive strand RNA genome. All these proteins contain a beta-sheet structure called beta-barrel jelly roll. Together they form an icosahedral capsid (T=3) composed of 60 copies of each VP1, VP2, and VP3, with a diameter of approximately 300 Angstroms. VP1 is situated at the 12 fivefold axes, whereas VP2 and VP3 are located at the quasi-sixfold axes. Functionally, VP0 precursor is a component of immature procapsids. The N-terminal domain of VP0, protein VP4, is needed for the assembly of 12 pentamers into the icosahedral structure. Unlike other picornaviruses, AEV VP4 may not be myristoylated. Its function is as follows. Protein 2B and 2BC precursor affect membrane integrity and cause an increase in membrane permeability. In terms of biological role, associates with and induces structural rearrangements of intracellular membranes. It displays RNA-binding, nucleotide binding and NTPase activities. Protein 3A, via its hydrophobic domain, serves as membrane anchor. Functionally, protein 3B is covalently linked to the 5'-end of both the positive-strand and negative-strand genomic RNAs. It acts as a genome-linked replication primer. Its function is as follows. Cysteine protease that generates mature viral proteins from the precursor polyprotein. In addition to its proteolytic activity, it binds to viral RNA, and thus influences viral genome replication. RNA and substrate bind cooperatively to the protease. In terms of biological role, RNA-directed RNA polymerase 3D-POL replicates genomic and antigenomic RNA by recognizing replications specific signals. This is Genome polyprotein from Avian encephalomyelitis virus (strain L2Z) (AEV).